The chain runs to 702 residues: Ribosomal RNA large subunit methyltransferase K/L (702 aa).

Positions 43-154 (LVYQSLMWSR…KETASIALDL (112 aa)) constitute a THUMP domain.

Belongs to the methyltransferase superfamily. RlmKL family.

Its subcellular location is the cytoplasm. It catalyses the reaction guanosine(2445) in 23S rRNA + S-adenosyl-L-methionine = N(2)-methylguanosine(2445) in 23S rRNA + S-adenosyl-L-homocysteine + H(+). The enzyme catalyses guanosine(2069) in 23S rRNA + S-adenosyl-L-methionine = N(2)-methylguanosine(2069) in 23S rRNA + S-adenosyl-L-homocysteine + H(+). In terms of biological role, specifically methylates the guanine in position 2445 (m2G2445) and the guanine in position 2069 (m7G2069) of 23S rRNA. This is Ribosomal RNA large subunit methyltransferase K/L from Escherichia coli O139:H28 (strain E24377A / ETEC).